Here is a 109-residue protein sequence, read N- to C-terminus: Elicitor peptide 2 (109 aa).

The propeptide occupies 1 to 73 (MEKLDKRREE…KDDDVVVLLR (73 aa)). Over residues 74 to 88 (DNKAKSKKRDKEKPS) the composition is skewed to basic and acidic residues. The interval 74-109 (DNKAKSKKRDKEKPSSGRPGQTNSVPNAAIQVYKED) is disordered.

The protein belongs to the brassicaceae elicitor peptide family.

Its function is as follows. Elicitor of plant defense. This Arabidopsis thaliana (Mouse-ear cress) protein is Elicitor peptide 2 (PEP2).